The primary structure comprises 175 residues: ATP-dependent protease subunit HslV (175 aa).

Threonine 2 is an active-site residue. Residues alanine 159, aspartate 162, and threonine 165 each coordinate Na(+).

This sequence belongs to the peptidase T1B family. HslV subfamily. A double ring-shaped homohexamer of HslV is capped on each side by a ring-shaped HslU homohexamer. The assembly of the HslU/HslV complex is dependent on binding of ATP.

It is found in the cytoplasm. The catalysed reaction is ATP-dependent cleavage of peptide bonds with broad specificity.. Allosterically activated by HslU binding. Protease subunit of a proteasome-like degradation complex believed to be a general protein degrading machinery. This Ligilactobacillus salivarius (strain UCC118) (Lactobacillus salivarius) protein is ATP-dependent protease subunit HslV.